An 84-amino-acid polypeptide reads, in one-letter code: Small ribosomal subunit protein uS15 (84 aa).

Belongs to the universal ribosomal protein uS15 family. As to quaternary structure, part of the 30S ribosomal subunit. Forms a bridge to the 50S subunit in the 70S ribosome, contacting the 23S rRNA.

Functionally, one of the primary rRNA binding proteins, it binds directly to 16S rRNA where it helps nucleate assembly of the platform of the 30S subunit by binding and bridging several RNA helices of the 16S rRNA. Its function is as follows. Forms an intersubunit bridge (bridge B4) with the 23S rRNA of the 50S subunit in the ribosome. The chain is Small ribosomal subunit protein uS15 from Akkermansia muciniphila (strain ATCC BAA-835 / DSM 22959 / JCM 33894 / BCRC 81048 / CCUG 64013 / CIP 107961 / Muc).